Reading from the N-terminus, the 264-residue chain is Short chain dehydrogenase/reductase dmxR18 (264 aa).

Residues Ile-24, Asp-70, Asn-97, and Arg-130 each contribute to the NADP(+) site. Catalysis depends on proton donor residues Ser-146 and Ser-147. Tyr-161, Lys-165, and Thr-196 together coordinate NADP(+). The active-site Proton acceptor is the Tyr-161. The Lowers pKa of active site Tyr role is filled by Lys-165.

Belongs to the short-chain dehydrogenases/reductases (SDR) family.

It catalyses the reaction 3,8,9,10-tetrahydroxy-6-methyl-1,4-dihydroanthracen-1-one + NADPH + H(+) = (3R)-3,8,9,10-tetrahydroxy-6-methyl-1,2,3,4-tetrahydroanthracen-1-one + NADP(+). It functions in the pathway secondary metabolite biosynthesis. In terms of biological role, short chain dehydrogenase/reductase; part of the gene cluster that mediates the biosynthesis of the dimeric xanthones cryptosporioptides. The pathway begins with the synthesis of atrochrysone thioester by the polyketide synthase dmx-nrPKS. The atrochrysone carboxyl ACP thioesterase dmxR1 then breaks the thioester bond and releases the atrochrysone carboxylic acid from dmx-nrPKS. Atrochrysone carboxylic acid is decarboxylated by the decarboxylase dmxR15, and oxidized by the anthrone oxygenase dmxR16 to yield emodin. Emodin is then reduced to emodin hydroquinone by the oxidoreductase dmxR7. A-ring reduction by the short chain dehydrogenase dmxR18, dehydration by the scytalone dehydratase-like protein dmxR17 and probable spontaneous re-oxidation, results in overall deoxygenation to chrysophanol. Baeyer-Villiger oxidation by the Baeyer-Villiger monooxygenase (BVMO) dmxR6 then yields monodictylactone in equilibrium with monodictyphenone. In the case of the cryptosporioptides biosynthesis, monodictylactone is reduced at C-12 to an alcohol (by the short chain dehydrogenases dmxR12 or dmxR8) and hydroxylated at C-5 by dmxR9, yielding the electron-rich aromatic which could eliminate H(2)O to form the ortho-quinonemethide, followed by tautomerisation to paraquinone and complete the formal reduction to produce the 10-methylgroup. Conjugate addition of C-4a-OH to the resulting paraquinone by the monooxygenase dmxR10 then gives cyclohexadienone, which is then reduced at C-5 by the short chain dehydrogenase dmxR3 to give the dihydroxanthone. The 6,7-epoxide in the cryptosporioptides could be introduced by the cytochrome P450 monooxygenase dmxL3. The highly reducing PKS dmxL2 manufactures butyrate, which is further carboxylated by dmxL1 to form ethylmalonate. It is not yet clear whether the carboxylation occurs while the butyrate is attached to the ACP of dmxL2, but this unusual fungal metabolite could then be esterified to O-5 by the O-acetyltransferase dmxR13. Finally, dimerization performed by dmxR5 gives the observed dimers cryptosporioptides A, B and C as the final products of the pathway. In Cryptosporiopsis sp. (strain 8999), this protein is Short chain dehydrogenase/reductase dmxR18.